The primary structure comprises 273 residues: Putative pyruvate, phosphate dikinase regulatory protein (273 aa).

153-160 lines the ADP pocket; sequence GISRTSKT.

This sequence belongs to the pyruvate, phosphate/water dikinase regulatory protein family. PDRP subfamily.

The catalysed reaction is N(tele)-phospho-L-histidyl/L-threonyl-[pyruvate, phosphate dikinase] + ADP = N(tele)-phospho-L-histidyl/O-phospho-L-threonyl-[pyruvate, phosphate dikinase] + AMP + H(+). It catalyses the reaction N(tele)-phospho-L-histidyl/O-phospho-L-threonyl-[pyruvate, phosphate dikinase] + phosphate + H(+) = N(tele)-phospho-L-histidyl/L-threonyl-[pyruvate, phosphate dikinase] + diphosphate. Functionally, bifunctional serine/threonine kinase and phosphorylase involved in the regulation of the pyruvate, phosphate dikinase (PPDK) by catalyzing its phosphorylation/dephosphorylation. This is Putative pyruvate, phosphate dikinase regulatory protein from Rhizobium etli (strain CIAT 652).